A 121-amino-acid polypeptide reads, in one-letter code: Acidic phospholipase A2 PLA-2 (121 aa).

7 disulfides stabilise this stretch: cysteine 26–cysteine 115, cysteine 28–cysteine 44, cysteine 43–cysteine 95, cysteine 49–cysteine 121, cysteine 50–cysteine 88, cysteine 57–cysteine 81, and cysteine 75–cysteine 86. Residues tyrosine 27, glycine 29, and glycine 31 each coordinate Ca(2+). The active site involves histidine 47. Aspartate 48 contacts Ca(2+). Aspartate 89 is an active-site residue.

Belongs to the phospholipase A2 family. Group II subfamily. D49 sub-subfamily. Requires Ca(2+) as cofactor. As to expression, expressed by the venom gland.

The protein resides in the secreted. It carries out the reaction a 1,2-diacyl-sn-glycero-3-phosphocholine + H2O = a 1-acyl-sn-glycero-3-phosphocholine + a fatty acid + H(+). Functionally, PLA2 catalyzes the calcium-dependent hydrolysis of the 2-acyl groups in 3-sn-phosphoglycerides. This is Acidic phospholipase A2 PLA-2 from Eristicophis macmahoni (Leaf-nosed viper).